A 129-amino-acid polypeptide reads, in one-letter code: Protein Turandot A1/2 (129 aa).

Positions 1–21 (MNSSTALMCFALLLISPLCLG) are cleaved as a signal peptide. A glycan (N-linked (GlcNAc...) asparagine) is linked at Asn-49.

The protein belongs to the Turandot family.

Its subcellular location is the secreted. Its function is as follows. A humoral factor that plays a role in stress tolerance; gives increased resistance to the lethal effects of bacterial challenge and stress. Regulated by the JAK/STAT pathway and NF-KB-like Relish pathway in the fat body, upd3 in the hemocytes and Mekk1 in response to septic injury and consequent immune response. In Drosophila sechellia (Fruit fly), this protein is Protein Turandot A1/2 (TotA1).